Consider the following 435-residue polypeptide: Glutamyl-tRNA reductase (435 aa).

Substrate-binding positions include 49–52 (TCNR), S109, 114–116 (ETQ), and Q120. C50 functions as the Nucleophile in the catalytic mechanism. 189-194 (GAGEMS) serves as a coordination point for NADP(+).

It belongs to the glutamyl-tRNA reductase family. In terms of assembly, homodimer.

It carries out the reaction (S)-4-amino-5-oxopentanoate + tRNA(Glu) + NADP(+) = L-glutamyl-tRNA(Glu) + NADPH + H(+). Its pathway is porphyrin-containing compound metabolism; protoporphyrin-IX biosynthesis; 5-aminolevulinate from L-glutamyl-tRNA(Glu): step 1/2. Its function is as follows. Catalyzes the NADPH-dependent reduction of glutamyl-tRNA(Glu) to glutamate 1-semialdehyde (GSA). This Listeria monocytogenes serotype 4b (strain CLIP80459) protein is Glutamyl-tRNA reductase.